The sequence spans 278 residues: ADP-dependent (S)-NAD(P)H-hydrate dehydratase (278 aa).

Positions 5–272 constitute a YjeF C-terminal domain; it reads TTEIVSRTII…TRIPTYMHRF (268 aa). Residues Ala40, Gly103, and His152 each coordinate (6S)-NADPHX. Gly214 provides a ligand contact to AMP. A (6S)-NADPHX-binding site is contributed by Asp215.

It belongs to the NnrD/CARKD family. As to quaternary structure, homotetramer. It depends on Mg(2+) as a cofactor.

It carries out the reaction (6S)-NADHX + ADP = AMP + phosphate + NADH + H(+). The enzyme catalyses (6S)-NADPHX + ADP = AMP + phosphate + NADPH + H(+). Functionally, catalyzes the dehydration of the S-form of NAD(P)HX at the expense of ADP, which is converted to AMP. Together with NAD(P)HX epimerase, which catalyzes the epimerization of the S- and R-forms, the enzyme allows the repair of both epimers of NAD(P)HX, a damaged form of NAD(P)H that is a result of enzymatic or heat-dependent hydration. This is ADP-dependent (S)-NAD(P)H-hydrate dehydratase from Lactiplantibacillus plantarum (strain ATCC BAA-793 / NCIMB 8826 / WCFS1) (Lactobacillus plantarum).